The following is an 837-amino-acid chain: Tuftelin-interacting protein 11 (837 aa).

Residues 1-13 show a composition bias toward basic and acidic residues; sequence MSLSHLYRDGEGH. Disordered regions lie at residues 1 to 31, 54 to 73, and 85 to 133; these read MSLS…DWDL, WAER…RARD, and LKKG…KGFA. The required for interaction with DHX15 stretch occupies residues 1–50; sequence MSLSHLYRDGEGHMDDDDDERENFEITDWDLQNEFNPNRQRHWQTKEEAT. At S2 the chain carries Phosphoserine. Positions 14-28 are enriched in acidic residues; that stretch reads MDDDDDERENFEITD. Over residues 54–64 the composition is skewed to basic and acidic residues; that stretch reads WAERDSDEERP. S59 and S98 each carry phosphoserine. A compositionally biased stretch (acidic residues) spans 91–102; that stretch reads EEAELEDSEDEE. Residues 103–116 are compositionally biased toward basic and acidic residues; that stretch reads KPVKQDDFPKDFGP. S144 is modified (phosphoserine). Residues 149–195 form the G-patch domain; that stretch reads TKGIGQKLLQKMGYVPGRGLGKNAQGIINPIEAKQRKGKGAVGAYGS. Disordered regions lie at residues 183-236 and 289-312; these read QRKG…KKKP and HNVP…EAKA. At S210 the chain carries Phosphoserine. Over residues 217-231 the composition is skewed to basic and acidic residues; it reads EFQKELSQWRKDPSG. Positions 700 to 705 match the Nuclear localization signal motif; that stretch reads VKDKFN. The segment at 710–734 is required for nuclear speckle localization; that stretch reads IMNRAVSSNVGAYMQPGARENIAYL.

This sequence belongs to the TFP11/STIP family. Identified in the spliceosome C complex. Found in the Intron Large (IL) complex, a post-mRNA release spliceosomal complex containing the excised intron, U2, U5 and U6 snRNPs, and splicing factors. Interacts with TUFT1. Interacts with DHX15; indicative for a recruitment of DHX15 to the IL complex. Interacts with GCFC2.

Its subcellular location is the cytoplasm. It is found in the nucleus. Involved in pre-mRNA splicing, specifically in spliceosome disassembly during late-stage splicing events. Intron turnover seems to proceed through reactions in two lariat-intron associated complexes termed Intron Large (IL) and Intron Small (IS). In cooperation with DHX15 seems to mediate the transition of the U2, U5 and U6 snRNP-containing IL complex to the snRNP-free IS complex leading to efficient debranching and turnover of excised introns. May play a role in the differentiation of ameloblasts and odontoblasts or in the forming of the enamel extracellular matrix. The protein is Tuftelin-interacting protein 11 (TFIP11) of Canis lupus familiaris (Dog).